A 191-amino-acid chain; its full sequence is Protein hugin (191 aa).

Positions 1–24 (MCGPSYCTLLLIAASCYILVCSHA) are cleaved as a signal peptide. The propeptide occupies 25-119 (KSLQGTSKLD…LTYYLLLQKL (95 aa)). Residues L137 and L181 each carry the leucine amide modification. A propeptide spanning residues 185–191 (AQVCGGD) is cleaved from the precursor.

This sequence belongs to the pyrokinin family. Expressed in a subgroup of neurosecretory cells in the subesophageal ganglion from embryonic stage 9 to larval stages.

The protein resides in the secreted. Probably has a role in larval molting. This is Protein hugin (Hug) from Drosophila melanogaster (Fruit fly).